A 1442-amino-acid chain; its full sequence is ABC transporter G family member 35 (1442 aa).

In terms of domain architecture, ABC transporter 1 spans 169–442 (LGMIGIRLAK…FESFGFKCPE (274 aa)). Residue 202–209 (GPPSSGKT) participates in ATP binding. The ABC transmembrane type-2 1 domain maps to 520–733 (ELLKSCWDKE…AFNAITVNEL (214 aa)). Helical transmembrane passes span 538–558 (FFYV…STLY), 573–593 (IYVG…LAEM), 619–639 (LPTF…WMVV), 657–677 (FLII…IAST), 683–703 (IANT…GFLL), 714–734 (WAYW…NELF), and 769–789 (IGVG…TLAL). The 253-residue stretch at 840-1092 (MSFDDVKYFV…KVVEYFESFP (253 aa)) folds into the ABC transporter 2 domain. 885-892 (GVSGAGKT) serves as a coordination point for ATP. Residues 1165-1379 (GQFKSCLWKQ…TIYGLITSQY (215 aa)) form the ABC transmembrane type-2 2 domain. Transmembrane regions (helical) follow at residues 1186–1206 (LVRF…FWQI), 1218–1238 (MVIG…CSTV), 1272–1292 (LPYV…MVGF), 1299–1319 (FLWF…YGMM), 1329–1349 (VASI…GFFI), 1357–1377 (WWVW…LITS), and 1414–1434 (PVAG…AFCI).

It belongs to the ABC transporter superfamily. ABCG family. PDR (TC 3.A.1.205) subfamily. As to expression, ubiquitous with higher levels in roots.

The protein localises to the membrane. Functionally, may be a general defense protein. The sequence is that of ABC transporter G family member 35 (ABCG35) from Arabidopsis thaliana (Mouse-ear cress).